The chain runs to 434 residues: L-2-hydroxyglutarate dehydrogenase, mitochondrial (434 aa).

It belongs to the L2HGDH family. FAD serves as cofactor.

It localises to the mitochondrion. The catalysed reaction is (S)-2-hydroxyglutarate + A = 2-oxoglutarate + AH2. The sequence is that of L-2-hydroxyglutarate dehydrogenase, mitochondrial from Caenorhabditis briggsae.